A 260-amino-acid chain; its full sequence is Snake venom serine protease homolog (260 aa).

A signal peptide spans 1-18 (MVLVRVLANLLMLQLSYA). The propeptide occupies 19-24 (QKSSEL). A Peptidase S1 domain is found at 25–251 (IIGGDECNIN…HLNWIQSIIA (227 aa)). Disulfide bonds link Cys-31–Cys-165, Cys-52–Cys-68, Cys-100–Cys-258, Cys-144–Cys-212, Cys-176–Cys-191, and Cys-202–Cys-227. 2 N-linked (GlcNAc...) asparagine glycosylation sites follow: Asn-123 and Asn-124. The N-linked (GlcNAc...) asparagine glycan is linked to Asn-253.

The protein belongs to the peptidase S1 family. Snake venom subfamily. Expressed by the venom gland.

The protein resides in the secreted. Its function is as follows. Snake venom serine protease homolog that may act in the hemostasis system of the prey. This Protobothrops jerdonii (Jerdon's pitviper) protein is Snake venom serine protease homolog.